The primary structure comprises 199 residues: Holliday junction branch migration complex subunit RuvA (199 aa).

Positions 1–65 (MIGWLHGQII…EDALLLYGFL (65 aa)) are domain I. The tract at residues 66–144 (DKEERSLFRS…QFDGSVSDTF (79 aa)) is domain II. The segment at 144-148 (FQKQA) is flexible linker. The tract at residues 149–199 (GSTHSQQEAISALEALGYKPQEAWKVMNKIDNGNKSCEQLIREALQILSSR) is domain III.

It belongs to the RuvA family. In terms of assembly, homotetramer. Forms an RuvA(8)-RuvB(12)-Holliday junction (HJ) complex. HJ DNA is sandwiched between 2 RuvA tetramers; dsDNA enters through RuvA and exits via RuvB. An RuvB hexamer assembles on each DNA strand where it exits the tetramer. Each RuvB hexamer is contacted by two RuvA subunits (via domain III) on 2 adjacent RuvB subunits; this complex drives branch migration. In the full resolvosome a probable DNA-RuvA(4)-RuvB(12)-RuvC(2) complex forms which resolves the HJ.

Its subcellular location is the cytoplasm. The RuvA-RuvB-RuvC complex processes Holliday junction (HJ) DNA during genetic recombination and DNA repair, while the RuvA-RuvB complex plays an important role in the rescue of blocked DNA replication forks via replication fork reversal (RFR). RuvA specifically binds to HJ cruciform DNA, conferring on it an open structure. The RuvB hexamer acts as an ATP-dependent pump, pulling dsDNA into and through the RuvAB complex. HJ branch migration allows RuvC to scan DNA until it finds its consensus sequence, where it cleaves and resolves the cruciform DNA. This chain is Holliday junction branch migration complex subunit RuvA, found in Legionella pneumophila subsp. pneumophila (strain Philadelphia 1 / ATCC 33152 / DSM 7513).